The sequence spans 358 residues: Peroxidase 54 (358 aa).

The signal sequence occupies residues 1-31 (MAVTSSSSTCDGFFIISLIVIVSSLFGTSSA). Q32 carries the post-translational modification Pyrrolidone carboxylic acid. N-linked (GlcNAc...) asparagine glycans are attached at residues N34 and N44. 4 disulfides stabilise this stretch: C42–C122, C75–C80, C128–C330, and C207–C239. H73 (proton acceptor) is an active-site residue. The Ca(2+) site is built by D74, V77, G79, D81, and S83. Residues N103, N161, and N166 are each glycosylated (N-linked (GlcNAc...) asparagine). A substrate-binding site is contributed by P170. Residue N178 is glycosylated (N-linked (GlcNAc...) asparagine). Position 200 (H200) interacts with heme b. T201 is a Ca(2+) binding site. 3 N-linked (GlcNAc...) asparagine glycosylation sites follow: N218, N228, and N242. Residues D252, T255, and D260 each coordinate Ca(2+). The N-linked (GlcNAc...) asparagine glycan is linked to N298.

It belongs to the peroxidase family. Classical plant (class III) peroxidase subfamily. Heme b is required as a cofactor. Ca(2+) serves as cofactor.

The protein resides in the secreted. It is found in the vacuole. It catalyses the reaction 2 a phenolic donor + H2O2 = 2 a phenolic radical donor + 2 H2O. Functionally, removal of H(2)O(2), oxidation of toxic reductants, biosynthesis and degradation of lignin, suberization, auxin catabolism, response to environmental stresses such as wounding, pathogen attack and oxidative stress. These functions might be dependent on each isozyme/isoform in each plant tissue. In Arabidopsis thaliana (Mouse-ear cress), this protein is Peroxidase 54 (PER54).